Consider the following 164-residue polypeptide: ATP synthase subunit b (164 aa).

Residues 10–32 (AVAFVLFFVLFGKKLWTPLAAAL) traverse the membrane as a helical segment.

Belongs to the ATPase B chain family. In terms of assembly, F-type ATPases have 2 components, F(1) - the catalytic core - and F(0) - the membrane proton channel. F(1) has five subunits: alpha(3), beta(3), gamma(1), delta(1), epsilon(1). F(0) has three main subunits: a(1), b(2) and c(10-14). The alpha and beta chains form an alternating ring which encloses part of the gamma chain. F(1) is attached to F(0) by a central stalk formed by the gamma and epsilon chains, while a peripheral stalk is formed by the delta and b chains.

Its subcellular location is the cell inner membrane. Functionally, f(1)F(0) ATP synthase produces ATP from ADP in the presence of a proton or sodium gradient. F-type ATPases consist of two structural domains, F(1) containing the extramembraneous catalytic core and F(0) containing the membrane proton channel, linked together by a central stalk and a peripheral stalk. During catalysis, ATP synthesis in the catalytic domain of F(1) is coupled via a rotary mechanism of the central stalk subunits to proton translocation. Component of the F(0) channel, it forms part of the peripheral stalk, linking F(1) to F(0). The protein is ATP synthase subunit b of Gluconacetobacter diazotrophicus (strain ATCC 49037 / DSM 5601 / CCUG 37298 / CIP 103539 / LMG 7603 / PAl5).